The sequence spans 211 residues: Pyridoxine/pyridoxamine 5'-phosphate oxidase (211 aa).

Substrate is bound by residues 7–10 (RREY) and Lys65. FMN is bound by residues 60–65 (RIVLLK), 75–76 (YT), Arg81, Lys82, and Gln104. Substrate-binding residues include Tyr122, Arg126, and Ser130. Residues 139 to 140 (QS) and Trp184 contribute to the FMN site. Residue 190-192 (RLH) participates in substrate binding. FMN is bound at residue Arg194.

This sequence belongs to the pyridoxamine 5'-phosphate oxidase family. As to quaternary structure, homodimer. FMN serves as cofactor.

The catalysed reaction is pyridoxamine 5'-phosphate + O2 + H2O = pyridoxal 5'-phosphate + H2O2 + NH4(+). It carries out the reaction pyridoxine 5'-phosphate + O2 = pyridoxal 5'-phosphate + H2O2. Its pathway is cofactor metabolism; pyridoxal 5'-phosphate salvage; pyridoxal 5'-phosphate from pyridoxamine 5'-phosphate: step 1/1. It functions in the pathway cofactor metabolism; pyridoxal 5'-phosphate salvage; pyridoxal 5'-phosphate from pyridoxine 5'-phosphate: step 1/1. Functionally, catalyzes the oxidation of either pyridoxine 5'-phosphate (PNP) or pyridoxamine 5'-phosphate (PMP) into pyridoxal 5'-phosphate (PLP). The polypeptide is Pyridoxine/pyridoxamine 5'-phosphate oxidase (Vibrio cholerae serotype O1 (strain ATCC 39315 / El Tor Inaba N16961)).